A 99-amino-acid chain; its full sequence is CLAVATA3/ESR (CLE)-related protein 11 (99 aa).

An N-terminal signal peptide occupies residues 1 to 31 (MTKQPKPCSFLFHISLLSALFVFLLISFAFT). Hydroxyproline is present on residues P91 and P94. P94 carries an O-linked (Ara...) hydroxyproline glycan.

Belongs to the CLV3/ESR signal peptide family. Post-translationally, the O-glycosylation (arabinosylation) of the hydroxyproline Pro-94 enhances binding affinity of the CLE11p peptide for its receptor. In terms of tissue distribution, mostly expressed in seedlings, roots and siliques, and, to a lower extent, in leaves, flowers, stems and apex.

The protein resides in the secreted. Its subcellular location is the extracellular space. Functionally, extracellular signal peptide that regulates cell fate. Represses root apical meristem maintenance. Regulates the transition of protophloem cells from proliferation to differentiation, thus impinging on postembryonic growth capacity of the root meristem; this signaling pathway requires CRN and CLV2. The polypeptide is CLAVATA3/ESR (CLE)-related protein 11 (Arabidopsis thaliana (Mouse-ear cress)).